Reading from the N-terminus, the 1224-residue chain is DNA-directed RNA polymerase subunit beta' (1224 aa).

Residues cysteine 60, cysteine 62, cysteine 75, and cysteine 78 each contribute to the Zn(2+) site. Mg(2+) is bound by residues aspartate 449, aspartate 451, and aspartate 453. Zn(2+) is bound by residues cysteine 819, cysteine 893, cysteine 900, and cysteine 903.

The protein belongs to the RNA polymerase beta' chain family. In terms of assembly, the RNAP catalytic core consists of 2 alpha, 1 beta, 1 beta' and 1 omega subunit. When a sigma factor is associated with the core the holoenzyme is formed, which can initiate transcription. Mg(2+) serves as cofactor. The cofactor is Zn(2+).

The enzyme catalyses RNA(n) + a ribonucleoside 5'-triphosphate = RNA(n+1) + diphosphate. Its function is as follows. DNA-dependent RNA polymerase catalyzes the transcription of DNA into RNA using the four ribonucleoside triphosphates as substrates. The sequence is that of DNA-directed RNA polymerase subunit beta' from Lactobacillus johnsonii (strain CNCM I-12250 / La1 / NCC 533).